We begin with the raw amino-acid sequence, 828 residues long: Leucine--tRNA ligase (828 aa).

The 'HIGH' region motif lies at 42–52 (PYPSGTLHVGH). A 'KMSKS' region motif is present at residues 582–586 (KMSKS). Lysine 585 contacts ATP.

It belongs to the class-I aminoacyl-tRNA synthetase family.

The protein resides in the cytoplasm. It carries out the reaction tRNA(Leu) + L-leucine + ATP = L-leucyl-tRNA(Leu) + AMP + diphosphate. The sequence is that of Leucine--tRNA ligase from Petrotoga mobilis (strain DSM 10674 / SJ95).